A 212-amino-acid chain; its full sequence is uncharacterized protein (212 aa).

The next 2 membrane-spanning stretches (helical) occupy residues 54-74 (LCFA…GYAG) and 79-99 (WIIC…ALLL).

It is found in the cell membrane. This is an uncharacterized protein from Chlamydia pneumoniae (Chlamydophila pneumoniae).